The primary structure comprises 519 residues: Na(+)/H(+) exchange regulatory cofactor NHE-RF3 (519 aa).

3 consecutive PDZ domains span residues 9–90, 134–215, and 243–323; these read ECKL…LDGD, RLCY…VDKE, and IVEM…VDKE. A phosphoserine mark is found at Ser148, Ser192, Ser250, Ser334, and Ser348. The disordered stretch occupies residues 347-374; sequence GSVKEAPAPTPTSLEVSSPPDTTEEVDH. Residues 357–367 show a composition bias toward polar residues; the sequence is PTSLEVSSPPD. The region spanning 378–458 is the PDZ 4 domain; the sequence is LCRLAKGENG…NVTLLVCGKK (81 aa). At Thr451 the chain carries Phosphothreonine. Residues 473–519 form a disordered region; sequence SLADPPDTPPDSKEGIVVESKHDSHMAKERAHSTASHSSSNSEDTEM. Residues 482 to 504 are compositionally biased toward basic and acidic residues; sequence PDSKEGIVVESKHDSHMAKERAH. 6 positions are modified to phosphoserine: Ser492, Ser508, Ser510, Ser511, Ser512, and Ser514. Positions 505-519 are enriched in low complexity; sequence STASHSSSNSEDTEM.

Belongs to the NHER family. In terms of assembly, interacts with PDZK1IP1 and ABCC2. Binds to the C-terminal region of SLC26A3. Interacts (via PDZ domains 1 and 3) with SCARB1 (C-terminal domain). Forms a heterodimeric complex with NHERF1. Interacts with AKAP2, BCR, CFTR, SLCO1A1, SLC22A12, SLC22A4, SLC22A5, NHERF2 and SLC17A1. Component of a complex, composed of PDZK1, SYNGAP1, KLHL17 and NMDA receptors. Interacts (via PDZ1 domain) directly with KLHL17; the interaction is important for integrity of actin cytoskeleton structures in neurons. Interacts (via C-terminal PDZ domain) with SLC26A6 (via C-terminal domain). Interacts (via C-terminal PDZ domain) with SLC9A3 (via C-terminal domain). Interacts (via the first PDZ domain) with PTGIR (via non-isoprenylated C-terminus). Interacts (via PDZ domains 1 and 3) with SLC5A8 (via PDZ-binding motif); interaction increases nicotinate transport activity of SLC5A8.

The protein localises to the membrane. Its subcellular location is the cell membrane. In terms of biological role, a scaffold protein that connects plasma membrane proteins and regulatory components, regulating their surface expression in epithelial cells apical domains. May be involved in the coordination of a diverse range of regulatory processes for ion transport and second messenger cascades. In complex with NHERF1, may cluster proteins that are functionally dependent in a mutual fashion and modulate the trafficking and the activity of the associated membrane proteins. May play a role in the cellular mechanisms associated with multidrug resistance through its interaction with ABCC2 and PDZK1IP1. May potentiate the CFTR chloride channel activity. Required for normal cell-surface expression of SCARB1. Plays a role in maintaining normal plasma cholesterol levels via its effects on SCARB1. Plays a role in the normal localization and function of the chloride-anion exchanger SLC26A6 to the plasma membrane in the brush border of the proximal tubule of the kidney. May be involved in the regulation of proximal tubular Na(+)-dependent inorganic phosphate cotransport therefore playing an important role in tubule function. The polypeptide is Na(+)/H(+) exchange regulatory cofactor NHE-RF3 (PDZK1) (Pongo abelii (Sumatran orangutan)).